The chain runs to 358 residues: Alanine racemase (358 aa).

Lys-35 functions as the Proton acceptor; specific for D-alanine in the catalytic mechanism. Lys-35 bears the N6-(pyridoxal phosphate)lysine mark. Arg-130 contributes to the substrate binding site. Catalysis depends on Tyr-255, which acts as the Proton acceptor; specific for L-alanine. Residue Met-303 coordinates substrate.

Belongs to the alanine racemase family. It depends on pyridoxal 5'-phosphate as a cofactor.

The enzyme catalyses L-alanine = D-alanine. It participates in amino-acid biosynthesis; D-alanine biosynthesis; D-alanine from L-alanine: step 1/1. Catalyzes the interconversion of L-alanine and D-alanine. May also act on other amino acids. This chain is Alanine racemase (alr), found in Shewanella sp. (strain ANA-3).